The sequence spans 325 residues: ATPase ASNA1 homolog 2 (325 aa).

Residue 22-29 (KGGVGKTT) participates in ATP binding. D51 is an active-site residue. Positions 231 and 258 each coordinate ATP. Residues C267 and C270 each coordinate Zn(2+).

It belongs to the arsA ATPase family. Homodimer.

It is found in the cytoplasm. The protein resides in the endoplasmic reticulum. ATPase required for the post-translational delivery of tail-anchored (TA) proteins to the endoplasmic reticulum. Recognizes and selectively binds the transmembrane domain of TA proteins in the cytosol. This complex then targets to the endoplasmic reticulum by membrane-bound receptors, where the tail-anchored protein is released for insertion. This process is regulated by ATP binding and hydrolysis. ATP binding drives the homodimer towards the closed dimer state, facilitating recognition of newly synthesized TA membrane proteins. ATP hydrolysis is required for insertion. Subsequently, the homodimer reverts towards the open dimer state, lowering its affinity for the membrane-bound receptor, and returning it to the cytosol to initiate a new round of targeting. This is ATPase ASNA1 homolog 2 from Paramecium tetraurelia.